Reading from the N-terminus, the 241-residue chain is Ribonuclease PH (241 aa).

Residues arginine 89 and 127-129 (GTR) each bind phosphate.

The protein belongs to the RNase PH family. In terms of assembly, homohexameric ring arranged as a trimer of dimers.

It carries out the reaction tRNA(n+1) + phosphate = tRNA(n) + a ribonucleoside 5'-diphosphate. In terms of biological role, phosphorolytic 3'-5' exoribonuclease that plays an important role in tRNA 3'-end maturation. Removes nucleotide residues following the 3'-CCA terminus of tRNAs; can also add nucleotides to the ends of RNA molecules by using nucleoside diphosphates as substrates, but this may not be physiologically important. Probably plays a role in initiation of 16S rRNA degradation (leading to ribosome degradation) during starvation. In Xanthomonas oryzae pv. oryzae (strain MAFF 311018), this protein is Ribonuclease PH.